Reading from the N-terminus, the 555-residue chain is Spermine oxidase (555 aa).

Residues A35, E55, R63, 79-80, and V261 each bind FAD; that span reads TW. The disordered stretch occupies residues 271–306; that stretch reads ARPRGPEIEPRGEGDHNHDTGEGGQGGEEPRGGRWD. Basic and acidic residues predominate over residues 274-291; that stretch reads RGPEIEPRGEGDHNHDTG. FAD contacts are provided by residues E519 and 528-529; that span reads TT.

The protein belongs to the flavin monoamine oxidase family. It depends on FAD as a cofactor. Widely expressed. Expressed in human tumor cell lines. Isoform 4 is only found in an embryonal kidney cell line.

The protein localises to the cytoplasm. It is found in the nucleus. The enzyme catalyses spermine + O2 + H2O = 3-aminopropanal + spermidine + H2O2. The protein operates within amine and polyamine degradation; spermine degradation. Its activity is regulated as follows. Inhibited at more than 90% by SL-11144, SL-11150 and SL-11158, at concentrations less than 1 uM. In terms of biological role, flavoenzyme which catalyzes the oxidation of spermine to spermidine. Can also use N(1)-acetylspermine and spermidine as substrates, with different affinity depending on the isoform (isozyme) and on the experimental conditions. Plays an important role in the regulation of polyamine intracellular concentration and has the potential to act as a determinant of cellular sensitivity to the antitumor polyamine analogs. May contribute to beta-alanine production via aldehyde dehydrogenase conversion of 3-amino-propanal. This is Spermine oxidase (SMOX) from Homo sapiens (Human).